The sequence spans 76 residues: Immune protein Tsi5 (76 aa).

2 helical membrane-spanning segments follow: residues 19–39 (LLMT…EWFF) and 43–63 (WVTV…LYLY).

The protein localises to the membrane. Its function is as follows. Immunity protein that plays a role in preventing early activation of toxin Tse5. This Pseudomonas aeruginosa (strain ATCC 15692 / DSM 22644 / CIP 104116 / JCM 14847 / LMG 12228 / 1C / PRS 101 / PAO1) protein is Immune protein Tsi5.